The chain runs to 38 residues: MQKFLTTAPVVAAIWFTLTAGILIEWNRFFPDLLFHPM.

Residues 4–24 (FLTTAPVVAAIWFTLTAGILI) traverse the membrane as a helical segment.

Belongs to the PsaJ family.

It localises to the cellular thylakoid membrane. May help in the organization of the PsaE and PsaF subunits. This Parasynechococcus marenigrum (strain WH8102) protein is Photosystem I reaction center subunit IX.